The primary structure comprises 107 residues: Large ribosomal subunit protein uL24 (107 aa).

The protein belongs to the universal ribosomal protein uL24 family. Part of the 50S ribosomal subunit.

One of two assembly initiator proteins, it binds directly to the 5'-end of the 23S rRNA, where it nucleates assembly of the 50S subunit. Its function is as follows. One of the proteins that surrounds the polypeptide exit tunnel on the outside of the subunit. The polypeptide is Large ribosomal subunit protein uL24 (Fervidobacterium nodosum (strain ATCC 35602 / DSM 5306 / Rt17-B1)).